The following is a 404-amino-acid chain: CCA-adding enzyme (404 aa).

ATP contacts are provided by Gly-32 and Arg-35. Residues Gly-32 and Arg-35 each contribute to the CTP site. Asp-45 and Asp-47 together coordinate Mg(2+). ATP-binding residues include Arg-116, Asp-159, Arg-162, Arg-165, and Arg-168. CTP is bound by residues Arg-116, Asp-159, Arg-162, Arg-165, and Arg-168.

Belongs to the tRNA nucleotidyltransferase/poly(A) polymerase family. Bacterial CCA-adding enzyme type 3 subfamily. Homodimer. Requires Mg(2+) as cofactor.

It catalyses the reaction a tRNA precursor + 2 CTP + ATP = a tRNA with a 3' CCA end + 3 diphosphate. It carries out the reaction a tRNA with a 3' CCA end + 2 CTP + ATP = a tRNA with a 3' CCACCA end + 3 diphosphate. In terms of biological role, catalyzes the addition and repair of the essential 3'-terminal CCA sequence in tRNAs without using a nucleic acid template. Adds these three nucleotides in the order of C, C, and A to the tRNA nucleotide-73, using CTP and ATP as substrates and producing inorganic pyrophosphate. tRNA 3'-terminal CCA addition is required both for tRNA processing and repair. Also involved in tRNA surveillance by mediating tandem CCA addition to generate a CCACCA at the 3' terminus of unstable tRNAs. While stable tRNAs receive only 3'-terminal CCA, unstable tRNAs are marked with CCACCA and rapidly degraded. In Ligilactobacillus salivarius (strain UCC118) (Lactobacillus salivarius), this protein is CCA-adding enzyme.